A 185-amino-acid chain; its full sequence is Elongation factor P (185 aa).

Belongs to the elongation factor P family.

The protein localises to the cytoplasm. Its pathway is protein biosynthesis; polypeptide chain elongation. Its function is as follows. Involved in peptide bond synthesis. Stimulates efficient translation and peptide-bond synthesis on native or reconstituted 70S ribosomes in vitro. Probably functions indirectly by altering the affinity of the ribosome for aminoacyl-tRNA, thus increasing their reactivity as acceptors for peptidyl transferase. This is Elongation factor P (efp) from Lactococcus lactis subsp. lactis (strain IL1403) (Streptococcus lactis).